We begin with the raw amino-acid sequence, 493 residues long: Galactose-1-phosphate uridylyltransferase (493 aa).

It belongs to the galactose-1-phosphate uridylyltransferase type 2 family.

It is found in the cytoplasm. The enzyme catalyses alpha-D-galactose 1-phosphate + UDP-alpha-D-glucose = alpha-D-glucose 1-phosphate + UDP-alpha-D-galactose. The protein operates within carbohydrate metabolism; galactose metabolism. The sequence is that of Galactose-1-phosphate uridylyltransferase (galT) from Streptococcus thermophilus.